Here is a 287-residue protein sequence, read N- to C-terminus: Sulfofructosephosphate aldolase (287 aa).

The active-site Proton donor is the Asp-82. Zn(2+) contacts are provided by His-83 and His-180. A dihydroxyacetone phosphate-binding site is contributed by Gly-181. His-208 is a Zn(2+) binding site. Dihydroxyacetone phosphate-binding positions include 209–211 (GGS) and 230–233 (NVDT).

It belongs to the class II fructose-bisphosphate aldolase family. It depends on Zn(2+) as a cofactor.

The catalysed reaction is 6-deoxy-6-sulfo-D-fructose 1-phosphate = (2S)-3-sulfolactaldehyde + dihydroxyacetone phosphate. Its function is as follows. Part of the sulfo-EMP2 pathway, a D-sulfoquinovose degradation pathway that produces sulfolactate (SL). Cleaves 6-deoxy-6-sulfo-D-fructose 1-phosphate (SFP) to form dihydroxyacetone phosphate (DHAP) and 3-sulfolactaldehyde (SLA). The protein is Sulfofructosephosphate aldolase of Alkalicoccus urumqiensis (Bacillus urumqiensis).